Consider the following 131-residue polypeptide: Small ribosomal subunit protein uS8 (131 aa).

The protein belongs to the universal ribosomal protein uS8 family. As to quaternary structure, part of the 30S ribosomal subunit. Contacts proteins S5 and S12.

Functionally, one of the primary rRNA binding proteins, it binds directly to 16S rRNA central domain where it helps coordinate assembly of the platform of the 30S subunit. The chain is Small ribosomal subunit protein uS8 from Azoarcus sp. (strain BH72).